Here is a 398-residue protein sequence, read N- to C-terminus: Flavohemoprotein (398 aa).

Residues 9–147 (QLTPAQIKII…LAKLLIDLEA (139 aa)) form the Globin domain. A heme b-binding site is contributed by histidine 93. Active-site charge relay system residues include tyrosine 103 and glutamate 146. The reductase stretch occupies residues 155-398 (WRWFKDFKVT…KLEYFGPYDP (244 aa)). In terms of domain architecture, FAD-binding FR-type spans 156-263 (RWFKDFKVTR…APPAGNFVYD (108 aa)). FAD contacts are provided by residues tyrosine 196 and 212 to 215 (REYS). An NADP(+)-binding site is contributed by 276 to 281 (GIGITP). 395–398 (PYDP) serves as a coordination point for FAD.

This sequence belongs to the globin family. FAD is required as a cofactor. It depends on heme b as a cofactor.

It localises to the cytoplasm. It catalyses the reaction 2 nitric oxide + NADPH + 2 O2 = 2 nitrate + NADP(+) + H(+). The enzyme catalyses 2 nitric oxide + NADH + 2 O2 = 2 nitrate + NAD(+) + H(+). Inhibited by imidazoles. In terms of biological role, nitric oxide dioxygenase involved in NO detoxification in an aerobic process, termed nitric oxide dioxygenase (NOD) reaction that utilizes O(2) and NAD(P)H to convert NO to nitrate, which protects the fungus from various noxious nitrogen compounds. Therefore, plays a central role in the inducible response to nitrosative stress. Plays a role in virulence since nitric oxide is generated by macrophages of the host immune system. In Candida albicans (strain SC5314 / ATCC MYA-2876) (Yeast), this protein is Flavohemoprotein (YHB1).